A 239-amino-acid chain; its full sequence is Uridylate kinase (239 aa).

13–16 (KVSG) contributes to the ATP binding site. G55 is a UMP binding site. Residues G56 and R60 each contribute to the ATP site. Residues D75 and 136 to 143 (TGNPFFTT) contribute to the UMP site. ATP contacts are provided by T163, Q164, Y169, and D172.

Belongs to the UMP kinase family. Homohexamer.

The protein localises to the cytoplasm. The enzyme catalyses UMP + ATP = UDP + ADP. It participates in pyrimidine metabolism; CTP biosynthesis via de novo pathway; UDP from UMP (UMPK route): step 1/1. With respect to regulation, inhibited by UTP. Its function is as follows. Catalyzes the reversible phosphorylation of UMP to UDP. The protein is Uridylate kinase of Bartonella henselae (strain ATCC 49882 / DSM 28221 / CCUG 30454 / Houston 1) (Rochalimaea henselae).